The chain runs to 330 residues: Beta-ketoacyl-[acyl-carrier-protein] synthase III 2 (330 aa).

Catalysis depends on residues cysteine 118 and histidine 246. The segment at 247–251 (QANLR) is ACP-binding. Residue asparagine 276 is part of the active site.

Belongs to the thiolase-like superfamily. FabH family. As to quaternary structure, homodimer.

Its subcellular location is the cytoplasm. It catalyses the reaction malonyl-[ACP] + acetyl-CoA + H(+) = 3-oxobutanoyl-[ACP] + CO2 + CoA. It participates in lipid metabolism; fatty acid biosynthesis. In terms of biological role, catalyzes the condensation reaction of fatty acid synthesis by the addition to an acyl acceptor of two carbons from malonyl-ACP. Catalyzes the first condensation reaction which initiates fatty acid synthesis and may therefore play a role in governing the total rate of fatty acid production. Possesses both acetoacetyl-ACP synthase and acetyl transacylase activities. Its substrate specificity determines the biosynthesis of branched-chain and/or straight-chain of fatty acids. The protein is Beta-ketoacyl-[acyl-carrier-protein] synthase III 2 of Streptomyces coelicolor (strain ATCC BAA-471 / A3(2) / M145).